We begin with the raw amino-acid sequence, 221 residues long: Transcription antitermination protein NusB (221 aa).

The protein belongs to the NusB family.

In terms of biological role, involved in transcription antitermination. Required for transcription of ribosomal RNA (rRNA) genes. Binds specifically to the boxA antiterminator sequence of the ribosomal RNA (rrn) operons. The protein is Transcription antitermination protein NusB of Synechocystis sp. (strain ATCC 27184 / PCC 6803 / Kazusa).